Reading from the N-terminus, the 402-residue chain is Protein FAM53A (402 aa).

The residue at position 119 (Ser-119) is a Phosphoserine. The disordered stretch occupies residues 170-215 (LVPGLPRRPVSPAGPTSPLTPRPASASSGFVDGSEGSTSSGPPWLS). Residues 273–281 (RRVRRKRRR) carry the Nuclear localization signal motif. Residues Ser-306 and Ser-309 each carry the phosphoserine modification. Residues 323 to 333 (TLVSSPCNSQG) show a composition bias toward polar residues. The segment at 323–402 (TLVSSPCNSQ…DLDLEQIENN (80 aa)) is disordered. Residues 336 to 345 (GIITPSSSPR) show a composition bias toward low complexity.

This sequence belongs to the FAM53 family.

The protein localises to the nucleus. Functionally, may play an important role in neural development; the dorsomedial roof of the third ventricle. The polypeptide is Protein FAM53A (Mus musculus (Mouse)).